The chain runs to 433 residues: Tol-Pal system protein TolB (433 aa).

The first 21 residues, 1 to 21 (MIKRLRGLLVMLCCVAGMAVA), serve as a signal peptide directing secretion.

The protein belongs to the TolB family. The Tol-Pal system is composed of five core proteins: the inner membrane proteins TolA, TolQ and TolR, the periplasmic protein TolB and the outer membrane protein Pal. They form a network linking the inner and outer membranes and the peptidoglycan layer.

The protein resides in the periplasm. Part of the Tol-Pal system, which plays a role in outer membrane invagination during cell division and is important for maintaining outer membrane integrity. This is Tol-Pal system protein TolB from Pseudomonas putida (strain ATCC 47054 / DSM 6125 / CFBP 8728 / NCIMB 11950 / KT2440).